The sequence spans 204 residues: Putative uracil phosphoribosyltransferase urg2 (204 aa).

5-phospho-alpha-D-ribose 1-diphosphate contacts are provided by residues arginine 75, arginine 100, and 126-134 (DPVMATGGT). Tyrosine 187 lines the D-ribose 5-phosphate pocket. Uracil is bound by residues leucine 188 and 193–195 (GDI). Aspartate 194 is a 5-phospho-alpha-D-ribose 1-diphosphate binding site.

Belongs to the UPRTase family. Mg(2+) serves as cofactor.

Its subcellular location is the cytoplasm. The protein resides in the nucleus. It catalyses the reaction UMP + diphosphate = 5-phospho-alpha-D-ribose 1-diphosphate + uracil. It participates in pyrimidine metabolism; UMP biosynthesis via salvage pathway; UMP from uracil: step 1/1. Allosterically activated by GTP. In terms of biological role, catalyzes the conversion of uracil and 5-phospho-alpha-D-ribose 1-diphosphate (PRPP) to UMP and diphosphate. The protein is Putative uracil phosphoribosyltransferase urg2 of Schizosaccharomyces pombe (strain 972 / ATCC 24843) (Fission yeast).